The following is a 171-amino-acid chain: L-methionine sulfoximine/L-methionine sulfone acetyltransferase (171 aa).

An N-acetyltransferase domain is found at 1-163 (MTIRFADKAD…DLTFMQLQLD (163 aa)). Substrate contacts are provided by residues 72-74 (RSF) and 82-84 (EHS). Residues 85–87 (VYV), 93–98 (GKGLGR), asparagine 124, and serine 133 contribute to the acetyl-CoA site.

Homodimer.

It carries out the reaction L-methionine sulfoximine + acetyl-CoA = N-acetyl-L-methionine sulfoximine + CoA + H(+). The catalysed reaction is L-methionine sulfone + acetyl-CoA = N-acetyl-L-methionine sulfone + CoA + H(+). Plays a role in the resistance against the toxic effects of L-methionine sulfoximine (MSX), a rare amino acid which inhibits glutamine synthetase (GlnA). Catalyzes the acetylation of MSX. It can also use L-methionine sulfone (MSO). Also catalyzes the acylation of free L-amino acids using an acyl-CoA as acyl donor. The chain is L-methionine sulfoximine/L-methionine sulfone acetyltransferase (yncA) from Salmonella typhimurium (strain LT2 / SGSC1412 / ATCC 700720).